The chain runs to 290 residues: Pyridoxal kinase PdxY (290 aa).

Substrate is bound by residues S9 and 44–45 (TQ). The ATP site is built by D112, V144, E149, and K182. Position 221 (D221) interacts with substrate.

This sequence belongs to the pyridoxine kinase family. PdxY subfamily. Homodimer. Mg(2+) is required as a cofactor.

The catalysed reaction is pyridoxal + ATP = pyridoxal 5'-phosphate + ADP + H(+). It participates in cofactor metabolism; pyridoxal 5'-phosphate salvage; pyridoxal 5'-phosphate from pyridoxal: step 1/1. Functionally, pyridoxal kinase involved in the salvage pathway of pyridoxal 5'-phosphate (PLP). Catalyzes the phosphorylation of pyridoxal to PLP. The polypeptide is Pyridoxal kinase PdxY (Vibrio vulnificus (strain CMCP6)).